Here is a 269-residue protein sequence, read N- to C-terminus: Staphylococcal secretory antigen ssaA2 (269 aa).

The N-terminal stretch at methionine 1–alanine 27 is a signal peptide. 7 repeat units span residues tyrosine 83–asparagine 85, tyrosine 88–asparagine 90, tyrosine 91–asparagine 93, tyrosine 97–asparagine 99, tyrosine 103–asparagine 105, tyrosine 106–asparagine 108, and tyrosine 115–asparagine 117. The 7 X 3 AA repeats of Y-[NS]-N stretch occupies residues tyrosine 83–tyrosine 115. Residues methionine 148–histidine 269 enclose the Peptidase C51 domain.

The protein localises to the secreted. In terms of biological role, not known; immunogenic protein. The chain is Staphylococcal secretory antigen ssaA2 (ssaA2) from Staphylococcus aureus (strain MSSA476).